A 363-amino-acid chain; its full sequence is NAD(P)H-quinone oxidoreductase subunit 1, chloroplastic (363 aa).

6 helical membrane passes run 30–50 (LVPI…IVWL), 98–118 (FSIG…IIPF), 129–149 (IGVF…LMSG), 248–268 (YSGI…LVSS), 300–320 (VFGT…FLFI), and 336–356 (LLNL…LLTT).

This sequence belongs to the complex I subunit 1 family. In terms of assembly, NDH is composed of at least 16 different subunits, 5 of which are encoded in the nucleus.

It is found in the plastid. The protein resides in the chloroplast thylakoid membrane. The enzyme catalyses a plastoquinone + NADH + (n+1) H(+)(in) = a plastoquinol + NAD(+) + n H(+)(out). It carries out the reaction a plastoquinone + NADPH + (n+1) H(+)(in) = a plastoquinol + NADP(+) + n H(+)(out). Its function is as follows. NDH shuttles electrons from NAD(P)H:plastoquinone, via FMN and iron-sulfur (Fe-S) centers, to quinones in the photosynthetic chain and possibly in a chloroplast respiratory chain. The immediate electron acceptor for the enzyme in this species is believed to be plastoquinone. Couples the redox reaction to proton translocation, and thus conserves the redox energy in a proton gradient. In Vitis vinifera (Grape), this protein is NAD(P)H-quinone oxidoreductase subunit 1, chloroplastic.